Here is a 334-residue protein sequence, read N- to C-terminus: Chitin synthase export chaperone (334 aa).

The next 7 membrane-spanning stretches (helical) occupy residues 49–69 (IIFE…TVIM), 85–105 (ILSF…IDAG), 123–143 (GLSS…FQLY), 159–179 (LAAF…WAGL), 185–205 (VGLF…YVAM), 220–240 (LGDI…LYAF), and 244–264 (ICIA…CNLL).

It belongs to the CHS7 family.

The protein localises to the endoplasmic reticulum membrane. Functionally, chaperone required for the export of the chitin synthase chs3 from the endoplasmic reticulum. Plays a critical role in cell wall integrity and virulence. In Fusarium oxysporum f. sp. lycopersici (strain 4287 / CBS 123668 / FGSC 9935 / NRRL 34936) (Fusarium vascular wilt of tomato), this protein is Chitin synthase export chaperone.